A 417-amino-acid polypeptide reads, in one-letter code: Argininosuccinate synthase (417 aa).

9–17 serves as a coordination point for ATP; that stretch reads AYSGGLDTS. An L-citrulline-binding site is contributed by Y87. Position 117 (G117) interacts with ATP. Positions 119, 123, and 124 each coordinate L-aspartate. N123 provides a ligand contact to L-citrulline. L-citrulline is bound by residues R127, S175, S184, E260, and Y272.

This sequence belongs to the argininosuccinate synthase family. Type 1 subfamily. Homotetramer.

The protein resides in the cytoplasm. It carries out the reaction L-citrulline + L-aspartate + ATP = 2-(N(omega)-L-arginino)succinate + AMP + diphosphate + H(+). The protein operates within amino-acid biosynthesis; L-arginine biosynthesis; L-arginine from L-ornithine and carbamoyl phosphate: step 2/3. This is Argininosuccinate synthase from Oceanobacillus iheyensis (strain DSM 14371 / CIP 107618 / JCM 11309 / KCTC 3954 / HTE831).